Consider the following 495-residue polypeptide: 4-aminobutyrate aminotransferase (495 aa).

160–161 serves as a coordination point for pyridoxal 5'-phosphate; sequence GS. Arg216 contributes to the substrate binding site. Lys350 is subject to N6-(pyridoxal phosphate)lysine. Thr374 contributes to the pyridoxal 5'-phosphate binding site.

It belongs to the class-III pyridoxal-phosphate-dependent aminotransferase family. In terms of assembly, homodimer. Pyridoxal 5'-phosphate is required as a cofactor.

It catalyses the reaction 4-aminobutanoate + 2-oxoglutarate = succinate semialdehyde + L-glutamate. This chain is 4-aminobutyrate aminotransferase (gabT), found in Dictyostelium discoideum (Social amoeba).